The chain runs to 226 residues: ATP synthase F(0) complex subunit a (226 aa).

Helical transmembrane passes span 6–26 (FASF…IILF), 68–88 (WSLM…LGLL), 97–117 (QLSM…VMGF), 138–158 (IPML…ALAV), 164–184 (ITAG…LSTI), and 189–209 (TLII…VALI).

This sequence belongs to the ATPase A chain family. Component of the ATP synthase complex composed at least of ATP5F1A/subunit alpha, ATP5F1B/subunit beta, ATP5MC1/subunit c (homooctomer), MT-ATP6/subunit a, MT-ATP8/subunit 8, ATP5ME/subunit e, ATP5MF/subunit f, ATP5MG/subunit g, ATP5MK/subunit k, ATP5MJ/subunit j, ATP5F1C/subunit gamma, ATP5F1D/subunit delta, ATP5F1E/subunit epsilon, ATP5PF/subunit F6, ATP5PB/subunit b, ATP5PD/subunit d, ATP5PO/subunit OSCP. ATP synthase complex consists of a soluble F(1) head domain (subunits alpha(3) and beta(3)) - the catalytic core - and a membrane F(0) domain - the membrane proton channel (subunits c, a, 8, e, f, g, k and j). These two domains are linked by a central stalk (subunits gamma, delta, and epsilon) rotating inside the F1 region and a stationary peripheral stalk (subunits F6, b, d, and OSCP). Interacts with DNAJC30; interaction is direct.

The protein resides in the mitochondrion inner membrane. The catalysed reaction is H(+)(in) = H(+)(out). Subunit a, of the mitochondrial membrane ATP synthase complex (F(1)F(0) ATP synthase or Complex V) that produces ATP from ADP in the presence of a proton gradient across the membrane which is generated by electron transport complexes of the respiratory chain. ATP synthase complex consist of a soluble F(1) head domain - the catalytic core - and a membrane F(1) domain - the membrane proton channel. These two domains are linked by a central stalk rotating inside the F(1) region and a stationary peripheral stalk. During catalysis, ATP synthesis in the catalytic domain of F(1) is coupled via a rotary mechanism of the central stalk subunits to proton translocation. With the subunit c (ATP5MC1), forms the proton-conducting channel in the F(0) domain, that contains two crucial half-channels (inlet and outlet) that facilitate proton movement from the mitochondrial intermembrane space (IMS) into the matrix. Protons are taken up via the inlet half-channel and released through the outlet half-channel, following a Grotthuss mechanism. In Pan paniscus (Pygmy chimpanzee), this protein is ATP synthase F(0) complex subunit a.